The primary structure comprises 138 residues: Large ribosomal subunit protein uL16 (138 aa).

A compositionally biased stretch (basic residues) spans 1 to 15; sequence MLSPRKVKYRKKQRG. The disordered stretch occupies residues 1–20; the sequence is MLSPRKVKYRKKQRGRLSGE.

This sequence belongs to the universal ribosomal protein uL16 family. In terms of assembly, part of the 50S ribosomal subunit.

In terms of biological role, binds 23S rRNA and is also seen to make contacts with the A and possibly P site tRNAs. This chain is Large ribosomal subunit protein uL16, found in Borrelia turicatae (strain 91E135).